The sequence spans 271 residues: ATP synthase subunit a (271 aa).

The next 5 helical transmembrane spans lie at phenylalanine 38–alanine 58, valine 100–leucine 120, aspartate 146–isoleucine 166, leucine 211–tryptophan 231, and alanine 242–valine 262.

The protein belongs to the ATPase A chain family. F-type ATPases have 2 components, CF(1) - the catalytic core - and CF(0) - the membrane proton channel. CF(1) has five subunits: alpha(3), beta(3), gamma(1), delta(1), epsilon(1). CF(0) has three main subunits: a(1), b(2) and c(9-12). The alpha and beta chains form an alternating ring which encloses part of the gamma chain. CF(1) is attached to CF(0) by a central stalk formed by the gamma and epsilon chains, while a peripheral stalk is formed by the delta and b chains.

The protein resides in the cell inner membrane. In terms of biological role, key component of the proton channel; it plays a direct role in the translocation of protons across the membrane. In Klebsiella pneumoniae (strain 342), this protein is ATP synthase subunit a.